Here is a 125-residue protein sequence, read N- to C-terminus: MSLPKDLLYTEEHEWVKADEGSYVIGITDFAQDQLGDIVFVELPEVGDTVAKGDSIGSIESVKTVSDFYAPVTGKVVAVNETLEDEPELINSNPYDTGWILKLEEVEEADVKALLSSDDYEKVLD.

Residues 22–104 (SYVIGITDFA…YDTGWILKLE (83 aa)) form the Lipoyl-binding domain. Position 63 is an N6-lipoyllysine (Lys63).

This sequence belongs to the GcvH family. As to quaternary structure, the glycine cleavage system is composed of four proteins: P, T, L and H. The cofactor is (R)-lipoate.

Functionally, the glycine cleavage system catalyzes the degradation of glycine. The H protein shuttles the methylamine group of glycine from the P protein to the T protein. Its function is as follows. Is also involved in protein lipoylation via its role as an octanoyl/lipoyl carrier protein intermediate. The sequence is that of Glycine cleavage system H protein from Listeria monocytogenes serotype 4b (strain CLIP80459).